The primary structure comprises 588 residues: Arginine--tRNA ligase (588 aa).

The 'HIGH' region signature appears at 126 to 136; that stretch reads PNIAKEMHVGH.

It belongs to the class-I aminoacyl-tRNA synthetase family. Monomer.

The protein resides in the cytoplasm. The catalysed reaction is tRNA(Arg) + L-arginine + ATP = L-arginyl-tRNA(Arg) + AMP + diphosphate. This chain is Arginine--tRNA ligase, found in Nostoc sp. (strain PCC 7120 / SAG 25.82 / UTEX 2576).